Reading from the N-terminus, the 421-residue chain is Gamma-glutamyl phosphate reductase (421 aa).

The protein belongs to the gamma-glutamyl phosphate reductase family.

The protein localises to the cytoplasm. The catalysed reaction is L-glutamate 5-semialdehyde + phosphate + NADP(+) = L-glutamyl 5-phosphate + NADPH + H(+). Its pathway is amino-acid biosynthesis; L-proline biosynthesis; L-glutamate 5-semialdehyde from L-glutamate: step 2/2. Its function is as follows. Catalyzes the NADPH-dependent reduction of L-glutamate 5-phosphate into L-glutamate 5-semialdehyde and phosphate. The product spontaneously undergoes cyclization to form 1-pyrroline-5-carboxylate. The polypeptide is Gamma-glutamyl phosphate reductase (Pseudomonas savastanoi pv. phaseolicola (strain 1448A / Race 6) (Pseudomonas syringae pv. phaseolicola (strain 1448A / Race 6))).